Here is a 272-residue protein sequence, read N- to C-terminus: Alcohol dehydrogenase-related 31 kDa protein (272 aa).

11 to 34 is an NAD(+) binding site; the sequence is YVADCGGIALETSKVLMTKNIAKL. Ser-139 is a binding site for substrate. Residue Tyr-152 is the Proton acceptor of the active site.

The protein belongs to the short-chain dehydrogenases/reductases (SDR) family.

This chain is Alcohol dehydrogenase-related 31 kDa protein (Adhr), found in Drosophila mauritiana (Fruit fly).